A 384-amino-acid chain; its full sequence is Opsin-3 (384 aa).

Residues 1–62 (MATNFTQELY…VSKYWHYVLA (62 aa)) lie on the Extracellular side of the membrane. N-linked (GlcNAc...) asparagine glycosylation is present at Asn4. The helical transmembrane segment at 63–83 (LIYTMLMVTSLTGNGIVIWIF) threads the bilayer. The Cytoplasmic segment spans residues 84–94 (STSKSLRSASN). Residues 95–115 (MFVINLAVFDLMMMLEMPLLI) form a helical membrane-spanning segment. Residues 116–132 (MNSFYQRLVGYQLGCDV) lie on the Extracellular side of the membrane. A disulfide bridge links Cys130 with Cys207. The chain crosses the membrane as a helical span at residues 133–153 (YAVLGSLSGIGGAITNAVIAF). Residues 154–171 (DRYKTISSPLDGRINTVQ) are Cytoplasmic-facing. Residues 172–192 (AGLLIAFTWFWALPFTILPAF) traverse the membrane as a helical segment. Residues 193–219 (RIWGRFVPEGFLTTCSFDYFTEDQDTE) lie on the Extracellular side of the membrane. The helical transmembrane segment at 220–240 (VFVACIFVWSYCIPMALICYF) threads the bilayer. Residues 241 to 284 (YSQLFGAVRLHERMLQEQAKKMNVKSLASNKEDNSRSVEIRIAK) lie on the Cytoplasmic side of the membrane. Residues 285–305 (VAFTIFFLFICAWTPYAFVTM) traverse the membrane as a helical segment. Topologically, residues 306 to 312 (TGAFGDR) are extracellular. A helical membrane pass occupies residues 313–333 (TLLTPIATMIPAVCCKVVSCI). The Cytoplasmic segment spans residues 334–384 (DPWVYAINHPRYRAELQKRLPWMGVREQDPDAVSTTTSVATAGFQPPAAEA).

The protein belongs to the G-protein coupled receptor 1 family. Opsin subfamily. In the retina, expression is essentially uniformly distributed but a higher level is seen in the ventral region where the B-cells are localized.

It is found in the membrane. Its function is as follows. Visual pigments are the light-absorbing molecules that mediate vision. They consist of an apoprotein, opsin, covalently linked to cis-retinal. May play a role in photoperiodic photoreception. This Manduca sexta (Tobacco hawkmoth) protein is Opsin-3 (OP3).